The chain runs to 915 residues: Protein O-mannosyl-transferase TMTC3 (915 aa).

Residues 1–8 (MANINLKE) lie on the Cytoplasmic side of the membrane. A helical transmembrane segment spans residues 9 to 29 (ITLIVGVVTACYWNSLFCGFV). The Extracellular portion of the chain corresponds to 30-93 (FDDVSAILDN…LSELKPMSYH (64 aa)). The chain crosses the membrane as a helical span at residues 94 to 114 (LLNMIFHAVVSVIFLKVCKLF). At 115 to 120 (LDNKSS) the chain is on the cytoplasmic side. Helical transmembrane passes span 121-139 (VIAS…AVTG) and 140-158 (VVGR…AFLS). Over 159-166 (YTRSKGPD) the chain is Cytoplasmic. The helical transmembrane segment at 167-187 (NSIIWTPIALTVFLVAVATLC) threads the bilayer. At 188 to 193 (KEQGIT) the chain is on the extracellular side. A helical membrane pass occupies residues 194 to 214 (VVGICCVYEVFIAQGYTLPLL). At 215–231 (CTTAGQFLRGKGSIPFS) the chain is on the cytoplasmic side. A helical transmembrane segment spans residues 232–252 (MLQTLVKLIVLMFSTLLLVVI). Residues 253 to 317 (RVQVIQSQLP…TIPLIESLLD (65 aa)) lie on the Extracellular side of the membrane. A helical transmembrane segment spans residues 318-338 (IRNLATFTFFCFLGMLGVFSI). The Cytoplasmic segment spans residues 339-353 (RYSGDSSKTVLMALC). A helical transmembrane segment spans residues 354–374 (LMALPFIPASNLFFPVGFVVA). The Extracellular portion of the chain corresponds to 375-376 (ER). The helical transmembrane segment at 377-397 (VLYVPSMGFCILVAHGWQKIS) threads the bilayer. Residues 398–404 (TKSVFKK) lie on the Cytoplasmic side of the membrane. A helical membrane pass occupies residues 405-423 (LSWICLSMVILTHSLKTFH). At 424-915 (RNWDWESEYT…EEIERILNGE (492 aa)) the chain is on the extracellular side. 9 TPR repeats span residues 446 to 479 (AKLW…QPDD), 480 to 513 (IGAH…MPQI), 529 to 562 (NVYI…RPDF), 563 to 596 (KQAY…DRNN), 597 to 631 (ADLW…NPKH), 669 to 702 (ANGY…QADF), 703 to 736 (RSAL…YPDH), 738 to 771 (KGLI…DPSN), and 772 to 805 (VQGK…APHE). N-linked (GlcNAc...) asparagine glycosylation is present at N494. Position 503 is a phosphotyrosine (Y503). N541 carries N-linked (GlcNAc...) asparagine glycosylation. The disordered stretch occupies residues 848-892 (KEIRGESRQTQIVKTSDNKSQSKSNKQLGKNGDEETPHKTTKDIK). The N-linked (GlcNAc...) asparagine glycan is linked to N865. Low complexity predominate over residues 865–874 (NKSQSKSNKQ). Residues 878 to 892 (NGDEETPHKTTKDIK) show a composition bias toward basic and acidic residues.

This sequence belongs to the TMTC family.

It is found in the membrane. It localises to the endoplasmic reticulum. It catalyses the reaction a di-trans,poly-cis-dolichyl beta-D-mannosyl phosphate + L-seryl-[protein] = 3-O-(alpha-D-mannosyl)-L-seryl-[protein] + a di-trans,poly-cis-dolichyl phosphate + H(+). The catalysed reaction is a di-trans,poly-cis-dolichyl beta-D-mannosyl phosphate + L-threonyl-[protein] = 3-O-(alpha-D-mannosyl)-L-threonyl-[protein] + a di-trans,poly-cis-dolichyl phosphate + H(+). The protein operates within protein modification; protein glycosylation. Functionally, transfers mannosyl residues to the hydroxyl group of serine or threonine residues. The 4 members of the TMTC family are O-mannosyl-transferases dedicated primarily to the cadherin superfamily, each member seems to have a distinct role in decorating the cadherin domains with O-linked mannose glycans at specific regions. Also acts as O-mannosyl-transferase on other proteins such as PDIA3. Involved in the positive regulation of proteasomal protein degradation in the endoplasmic reticulum (ER), and the control of ER stress response. The protein is Protein O-mannosyl-transferase TMTC3 of Homo sapiens (Human).